We begin with the raw amino-acid sequence, 2512 residues long: Isonitrile lipopeptide synthase (2512 aa).

Carrier domains are found at residues 935–1003 (AAGL…PTPD) and 1984–2059 (APAG…GRDA). O-(pantetheine 4'-phosphoryl)serine occurs at positions 963 and 2019. One can recognise a Thioester reductase (TE) domain in the interval 2112–2372 (LTGATGFLGR…LPVTFVAEAI (261 aa)).

This sequence belongs to the ATP-dependent AMP-binding enzyme family. Pantetheine 4'-phosphate serves as cofactor.

The catalysed reaction is 2 a (3R)-3-isocyanyl-fatty acyl-[ACP] + L-lysine + ATP + 2 NADPH = an isonitrile lipopeptide + 2 holo-[ACP] + AMP + diphosphate + 2 NADP(+). Its function is as follows. Nonribosomal peptide synthetase (NRPS) involved in the biosynthesis of a unique class of isonitrile lipopeptides (INLPs) that seem to function as virulence factors in M.tuberculosis and to play a role in metal acquisition. Catalyzes the final step in the pathway, i.e. the condensation of a (3R)-3-isocyanyl-fatty acyl-[ACP] to both amino groups of a lysine, producing isonitrile lipopeptides. This Mycobacterium tuberculosis (strain ATCC 25618 / H37Rv) protein is Isonitrile lipopeptide synthase.